A 284-amino-acid chain; its full sequence is Tropomyosin Per a 7.0101 (284 aa).

Positions 22 to 266 (ALLCEQQARD…EDELVHEKEK (245 aa)) form a coiled coil.

It belongs to the tropomyosin family. In terms of assembly, homodimer.

Its function is as follows. Tropomyosin, in association with the troponin complex, plays a central role in the calcium dependent regulation of muscle contraction. The chain is Tropomyosin Per a 7.0101 from Periplaneta americana (American cockroach).